Here is a 165-residue protein sequence, read N- to C-terminus: Transcription antitermination protein NusB (165 aa).

Belongs to the NusB family.

Its function is as follows. Involved in transcription antitermination. Required for transcription of ribosomal RNA (rRNA) genes. Binds specifically to the boxA antiterminator sequence of the ribosomal RNA (rrn) operons. In Chlorobium phaeobacteroides (strain DSM 266 / SMG 266 / 2430), this protein is Transcription antitermination protein NusB.